A 123-amino-acid polypeptide reads, in one-letter code: Large ribosomal subunit protein uL22c (123 aa).

This sequence belongs to the universal ribosomal protein uL22 family. Part of the 50S ribosomal subunit.

It is found in the plastid. It localises to the chloroplast. This protein binds specifically to 23S rRNA. Functionally, the globular domain of the protein is located near the polypeptide exit tunnel on the outside of the subunit, while an extended beta-hairpin is found that lines the wall of the exit tunnel in the center of the 70S ribosome. This is Large ribosomal subunit protein uL22c (rpl22) from Chara vulgaris (Common stonewort).